The following is a 1407-amino-acid chain: DNA-directed RNA polymerase subunit beta' (1407 aa).

4 residues coordinate Zn(2+): Cys70, Cys72, Cys85, and Cys88. Mg(2+) contacts are provided by Asp460, Asp462, and Asp464. Residues Cys814, Cys888, Cys895, and Cys898 each contribute to the Zn(2+) site. Lys972 is modified (N6-acetyllysine).

Belongs to the RNA polymerase beta' chain family. In terms of assembly, the RNAP catalytic core consists of 2 alpha, 1 beta, 1 beta' and 1 omega subunit. When a sigma factor is associated with the core the holoenzyme is formed, which can initiate transcription. The cofactor is Mg(2+). Zn(2+) is required as a cofactor.

The catalysed reaction is RNA(n) + a ribonucleoside 5'-triphosphate = RNA(n+1) + diphosphate. Functionally, DNA-dependent RNA polymerase catalyzes the transcription of DNA into RNA using the four ribonucleoside triphosphates as substrates. The sequence is that of DNA-directed RNA polymerase subunit beta' from Shigella sonnei (strain Ss046).